Consider the following 253-residue polypeptide: Zwei Ig domain protein zig-4 (253 aa).

The first 16 residues, 1-16, serve as a signal peptide directing secretion; sequence MFAIALLSFLVVLINA. Ig-like C2-type domains follow at residues 43–146 and 162–245; these read PAKI…AEVE and PEIV…TFLY. 2 disulfide bridges follow: C67-C130 and C183-C229.

As to expression, expressed in PVT, ASK, BAG, M2 and ASI neurons. In L1 larvae, expressed in pharyngeal ectoderm and mesoderm.

The protein resides in the secreted. In terms of biological role, required for maintaining axon position of PVQ and PVP neurons postembryonically in the ventral nerve cord (VNC) by preventing axons drifting into the opposite side of the VNC that could occur during body growth and movement. The polypeptide is Zwei Ig domain protein zig-4 (Caenorhabditis elegans).